Here is an 805-residue protein sequence, read N- to C-terminus: Leucine--tRNA ligase (805 aa).

A 'HIGH' region motif is present at residues 39 to 50 (PYPSGKGLHVGH). Residues 583–587 (KMSKS) carry the 'KMSKS' region motif. Residue Lys-586 coordinates ATP.

It belongs to the class-I aminoacyl-tRNA synthetase family.

It is found in the cytoplasm. It carries out the reaction tRNA(Leu) + L-leucine + ATP = L-leucyl-tRNA(Leu) + AMP + diphosphate. The protein is Leucine--tRNA ligase of Mycoplasmoides gallisepticum (strain R(low / passage 15 / clone 2)) (Mycoplasma gallisepticum).